A 234-amino-acid polypeptide reads, in one-letter code: Uridylate kinase (234 aa).

9 to 12 contributes to the ATP binding site; that stretch reads KLSG. Residue Gly-51 coordinates UMP. Gly-52 and Arg-56 together coordinate ATP. Residues Asp-71 and 132 to 139 contribute to the UMP site; that span reads CGNPFFTT. Thr-159, Tyr-165, and Asp-168 together coordinate ATP.

This sequence belongs to the UMP kinase family. As to quaternary structure, homohexamer.

The protein localises to the cytoplasm. It carries out the reaction UMP + ATP = UDP + ADP. Its pathway is pyrimidine metabolism; CTP biosynthesis via de novo pathway; UDP from UMP (UMPK route): step 1/1. Its activity is regulated as follows. Inhibited by UTP. Catalyzes the reversible phosphorylation of UMP to UDP. This chain is Uridylate kinase, found in Prochlorococcus marinus (strain MIT 9312).